A 158-amino-acid polypeptide reads, in one-letter code: Phosphopantetheine adenylyltransferase (158 aa).

T9 is a binding site for substrate. ATP is bound by residues 9–10 and H17; that span reads TF. K41, L73, and R87 together coordinate substrate. ATP is bound by residues 88–90, E98, and 123–129; these read GVR and WSYVSST.

It belongs to the bacterial CoaD family. In terms of assembly, homohexamer. Mg(2+) serves as cofactor.

Its subcellular location is the cytoplasm. It catalyses the reaction (R)-4'-phosphopantetheine + ATP + H(+) = 3'-dephospho-CoA + diphosphate. It participates in cofactor biosynthesis; coenzyme A biosynthesis; CoA from (R)-pantothenate: step 4/5. In terms of biological role, reversibly transfers an adenylyl group from ATP to 4'-phosphopantetheine, yielding dephospho-CoA (dPCoA) and pyrophosphate. This is Phosphopantetheine adenylyltransferase from Pasteurella multocida (strain Pm70).